We begin with the raw amino-acid sequence, 255 residues long: Transcription factor CAULIFLOWER (255 aa).

One can recognise an MADS-box domain in the interval 1 to 61 (MGRGRVELKR…GKLFEYSSES (61 aa)). Residues 90–180 (QTNWSMEYSR…TKQIKERENI (91 aa)) enclose the K-box domain. The stretch at 90-198 (QTNWSMEYSR…EQLNRSVDDV (109 aa)) forms a coiled coil.

Homodimer capable of binding to CArG-box sequences. Expressed in young flower primordia.

It localises to the nucleus. Its function is as follows. Probable transcription factor that promotes early floral meristem identity in synergy with APETALA1, FRUITFULL and LEAFY. Is required subsequently for the transition of an inflorescence meristem into a floral meristem. Seems to be partially redundant to the function of APETALA1. Positively regulates the APETALA1 and LEAFY expression. This Arabidopsis thaliana (Mouse-ear cress) protein is Transcription factor CAULIFLOWER (CAL).